The sequence spans 107 residues: uncharacterized protein (107 aa).

This is an uncharacterized protein from Escherichia coli (strain K12).